Reading from the N-terminus, the 44-residue chain is Photosystem I reaction center subunit IX (44 aa).

The helical transmembrane segment at Tyr7–Ile27 threads the bilayer.

The protein belongs to the PsaJ family.

Its subcellular location is the plastid. The protein resides in the chloroplast thylakoid membrane. Functionally, may help in the organization of the PsaE and PsaF subunits. The chain is Photosystem I reaction center subunit IX from Glycine max (Soybean).